Here is a 240-residue protein sequence, read N- to C-terminus: UDP-2,3-diacylglucosamine hydrolase (240 aa).

Asp8, His10, Asp41, Asn78, and His113 together coordinate Mn(2+). A substrate-binding site is contributed by 78 to 79; sequence NR. Positions 121, 159, 163, 166, and 194 each coordinate substrate. Mn(2+) contacts are provided by His194 and His196.

This sequence belongs to the LpxH family. It depends on Mn(2+) as a cofactor.

The protein resides in the cell inner membrane. The enzyme catalyses UDP-2-N,3-O-bis[(3R)-3-hydroxytetradecanoyl]-alpha-D-glucosamine + H2O = 2-N,3-O-bis[(3R)-3-hydroxytetradecanoyl]-alpha-D-glucosaminyl 1-phosphate + UMP + 2 H(+). The protein operates within glycolipid biosynthesis; lipid IV(A) biosynthesis; lipid IV(A) from (3R)-3-hydroxytetradecanoyl-[acyl-carrier-protein] and UDP-N-acetyl-alpha-D-glucosamine: step 4/6. In terms of biological role, hydrolyzes the pyrophosphate bond of UDP-2,3-diacylglucosamine to yield 2,3-diacylglucosamine 1-phosphate (lipid X) and UMP by catalyzing the attack of water at the alpha-P atom. Involved in the biosynthesis of lipid A, a phosphorylated glycolipid that anchors the lipopolysaccharide to the outer membrane of the cell. This Shewanella baltica (strain OS223) protein is UDP-2,3-diacylglucosamine hydrolase.